Reading from the N-terminus, the 484-residue chain is 1,3-beta-glucanosyltransferase GAS5 (484 aa).

Residues 1-19 form the signal peptide; sequence MLLRSLTSAFVLSAGLAQA. Residues Asn-24 and Asn-60 are each glycosylated (N-linked (GlcNAc...) asparagine). An intrachain disulfide couples Cys-71 to Cys-100. (1,3-beta-D-glucosyl)n is bound by residues Tyr-89, Asn-159, and Glu-160. The Proton donor role is filled by Glu-160. N-linked (GlcNAc...) asparagine glycosylation occurs at Asn-166. Asp-201 and Arg-206 together coordinate (1,3-beta-D-glucosyl)n. 2 cysteine pairs are disulfide-bonded: Cys-215–Cys-348 and Cys-234–Cys-265. The active-site Nucleophile is the Glu-262. Tyr-295 is a binding site for (1,3-beta-D-glucosyl)n. N-linked (GlcNAc...) asparagine glycosylation is found at Asn-299, Asn-344, and Asn-359. The interval 383-462 is disordered; the sequence is TGIATQQSCD…SSQSSSKSKG (80 aa). Positions 394–404 are enriched in acidic residues; that stretch reads KDDDDEEDDDT. The span at 405 to 462 shows a compositional bias: low complexity; the sequence is SSSSSSSSSSSSSASSSSESSSSTSKASSSSPSASETSLLKSAASATSSSQSSSKSKG. The GPI-anchor amidated glycine moiety is linked to residue Gly-462. Positions 463–484 are cleaved as a propeptide — removed in mature form; that stretch reads AAGIIEIPLIFRALAELYNLVL.

The protein belongs to the glycosyl hydrolase 72 family. The GPI-anchor is attached to the protein in the endoplasmic reticulum and serves to target the protein to the cell surface. There, the glucosamine-inositol phospholipid moiety is cleaved off and the GPI-modified mannoprotein is covalently attached via its lipidless GPI glycan remnant to the 1,6-beta-glucan of the outer cell wall layer.

The protein resides in the secreted. The protein localises to the cell wall. It localises to the membrane. In terms of biological role, splits internally a 1,3-beta-glucan molecule and transfers the newly generated reducing end (the donor) to the non-reducing end of another 1,3-beta-glucan molecule (the acceptor) forming a 1,3-beta linkage, resulting in the elongation of 1,3-beta-glucan chains in the cell wall. Involved in cell wall biosynthesis and morphogenesis. This Saccharomyces cerevisiae (strain ATCC 204508 / S288c) (Baker's yeast) protein is 1,3-beta-glucanosyltransferase GAS5 (GAS5).